The primary structure comprises 389 residues: Large ribosomal subunit protein uL3 (389 aa).

The protein belongs to the universal ribosomal protein uL3 family. In terms of assembly, component of the large ribosomal subunit. Mature ribosomes consist of a small (40S) and a large (60S) subunit. The 40S subunit contains about 32 different proteins and 1 molecule of RNA (18S). The 60S subunit contains 45 different proteins and 3 molecules of RNA (25S, 5.8S and 5S).

It localises to the cytoplasm. Component of the ribosome, a large ribonucleoprotein complex responsible for the synthesis of proteins in the cell. The small ribosomal subunit (SSU) binds messenger RNAs (mRNAs) and translates the encoded message by selecting cognate aminoacyl-transfer RNA (tRNA) molecules. The large subunit (LSU) contains the ribosomal catalytic site termed the peptidyl transferase center (PTC), which catalyzes the formation of peptide bonds, thereby polymerizing the amino acids delivered by tRNAs into a polypeptide chain. The nascent polypeptides leave the ribosome through a tunnel in the LSU and interact with protein factors that function in enzymatic processing, targeting, and the membrane insertion of nascent chains at the exit of the ribosomal tunnel. RPL3 plays a role in coordinating processes of accommodating the aminoacyl-tRNA in the PTC. The sequence is that of Large ribosomal subunit protein uL3 from Candida albicans (strain SC5314 / ATCC MYA-2876) (Yeast).